Here is a 512-residue protein sequence, read N- to C-terminus: Glycerol kinase 1 (512 aa).

Thr18 provides a ligand contact to ADP. ATP-binding residues include Thr18, Thr19, and Ser20. Thr18 is a binding site for sn-glycerol 3-phosphate. Position 22 (Arg22) interacts with ADP. Sn-glycerol 3-phosphate-binding residues include Arg88, Glu89, Tyr140, and Asp255. 5 residues coordinate glycerol: Arg88, Glu89, Tyr140, Asp255, and Gln256. ADP is bound by residues Thr277 and Gly321. Thr277, Gly321, Gln325, and Gly422 together coordinate ATP. ADP-binding residues include Gly422 and Asn426.

This sequence belongs to the FGGY kinase family.

It carries out the reaction glycerol + ATP = sn-glycerol 3-phosphate + ADP + H(+). The protein operates within polyol metabolism; glycerol degradation via glycerol kinase pathway; sn-glycerol 3-phosphate from glycerol: step 1/1. Its activity is regulated as follows. Inhibited by fructose 1,6-bisphosphate (FBP). Functionally, key enzyme in the regulation of glycerol uptake and metabolism. Catalyzes the phosphorylation of glycerol to yield sn-glycerol 3-phosphate. In Streptomyces avermitilis (strain ATCC 31267 / DSM 46492 / JCM 5070 / NBRC 14893 / NCIMB 12804 / NRRL 8165 / MA-4680), this protein is Glycerol kinase 1.